A 178-amino-acid polypeptide reads, in one-letter code: GTP-dependent dephospho-CoA kinase (178 aa).

Aspartate 55, valine 57, aspartate 74, lysine 76, and glutamate 127 together coordinate GTP.

This sequence belongs to the GTP-dependent DPCK family.

It catalyses the reaction 3'-dephospho-CoA + GTP = GDP + CoA + H(+). The protein operates within cofactor biosynthesis; coenzyme A biosynthesis. Functionally, catalyzes the GTP-dependent phosphorylation of the 3'-hydroxyl group of dephosphocoenzyme A to form coenzyme A (CoA). This is GTP-dependent dephospho-CoA kinase from Saccharolobus islandicus (strain Y.N.15.51 / Yellowstone #2) (Sulfolobus islandicus).